The chain runs to 85 residues: UPF0181 protein YPO1774/y2534/YP_1619 (85 aa).

The segment at 50–85 (QAMAIFEDHDFDEHTESDYRRDDEPDADDIEDPYEG) is disordered. A compositionally biased stretch (basic and acidic residues) spans 55–72 (FEDHDFDEHTESDYRRDD). Positions 73–85 (EPDADDIEDPYEG) are enriched in acidic residues.

This sequence belongs to the UPF0181 family.

This Yersinia pestis protein is UPF0181 protein YPO1774/y2534/YP_1619.